The chain runs to 268 residues: Spore wall protein 25 (268 aa).

Positions 1-25 are cleaved as a signal peptide; it reads MFSTKQVVLSSLLFISSIYTSNVNG. Residue asparagine 27 is glycosylated (N-linked (GlcNAc...) asparagine). The short motif at 77–82 is the HBM element; sequence CKKSKE. N-linked (GlcNAc...) asparagine glycosylation is found at asparagine 133 and asparagine 150.

The protein resides in the spore wall. In Nosema bombycis (strain CQ1 / CVCC 102059) (Microsporidian parasite), this protein is Spore wall protein 25 (SWP25).